A 256-amino-acid polypeptide reads, in one-letter code: Triosephosphate isomerase (256 aa).

10–12 is a binding site for substrate; the sequence is NWK. The Electrophile role is filled by histidine 97. Glutamate 169 (proton acceptor) is an active-site residue. Residues glycine 175, serine 214, and 235-236 each bind substrate; that span reads GG.

Belongs to the triosephosphate isomerase family. As to quaternary structure, homodimer.

It localises to the cytoplasm. It catalyses the reaction D-glyceraldehyde 3-phosphate = dihydroxyacetone phosphate. It participates in carbohydrate biosynthesis; gluconeogenesis. It functions in the pathway carbohydrate degradation; glycolysis; D-glyceraldehyde 3-phosphate from glycerone phosphate: step 1/1. Involved in the gluconeogenesis. Catalyzes stereospecifically the conversion of dihydroxyacetone phosphate (DHAP) to D-glyceraldehyde-3-phosphate (G3P). This Haemophilus ducreyi (strain 35000HP / ATCC 700724) protein is Triosephosphate isomerase.